A 123-amino-acid polypeptide reads, in one-letter code: MPTIQQLIRKPRQPKIKRSKSMHLQECPQKRGVCTRVYTTTPKKPNSAMRKVAKVRLTNGFEVISYIPGESHNLQEHSVVLIRGGRVKDLPGVRYHILRGVLDTQGVKDRKQRRSKYGAKRPK.

Residues M1–C27 form a disordered region. The span at R9–S21 shows a compositional bias: basic residues. D89 carries the 3-methylthioaspartic acid modification.

This sequence belongs to the universal ribosomal protein uS12 family. In terms of assembly, part of the 30S ribosomal subunit. Contacts proteins S8 and S17. May interact with IF1 in the 30S initiation complex.

In terms of biological role, with S4 and S5 plays an important role in translational accuracy. Its function is as follows. Interacts with and stabilizes bases of the 16S rRNA that are involved in tRNA selection in the A site and with the mRNA backbone. Located at the interface of the 30S and 50S subunits, it traverses the body of the 30S subunit contacting proteins on the other side and probably holding the rRNA structure together. The combined cluster of proteins S8, S12 and S17 appears to hold together the shoulder and platform of the 30S subunit. The polypeptide is Small ribosomal subunit protein uS12 (Roseobacter denitrificans (strain ATCC 33942 / OCh 114) (Erythrobacter sp. (strain OCh 114))).